Reading from the N-terminus, the 409-residue chain is Arginine deiminase (409 aa).

The active-site Amidino-cysteine intermediate is cysteine 399.

Belongs to the arginine deiminase family.

It is found in the cytoplasm. The enzyme catalyses L-arginine + H2O = L-citrulline + NH4(+). The protein operates within amino-acid degradation; L-arginine degradation via ADI pathway; carbamoyl phosphate from L-arginine: step 1/2. This Latilactobacillus sakei (Lactobacillus sakei) protein is Arginine deiminase (arcA).